The following is a 258-amino-acid chain: Type III pantothenate kinase (258 aa).

Residue 6 to 13 (DVGNTNIV) coordinates ATP. Residues Y100 and 107-110 (GADR) each bind substrate. D109 (proton acceptor) is an active-site residue. Residue D129 coordinates K(+). Residue T132 coordinates ATP. T184 lines the substrate pocket.

This sequence belongs to the type III pantothenate kinase family. In terms of assembly, homodimer. NH4(+) is required as a cofactor. The cofactor is K(+).

The protein resides in the cytoplasm. It catalyses the reaction (R)-pantothenate + ATP = (R)-4'-phosphopantothenate + ADP + H(+). The protein operates within cofactor biosynthesis; coenzyme A biosynthesis; CoA from (R)-pantothenate: step 1/5. Catalyzes the phosphorylation of pantothenate (Pan), the first step in CoA biosynthesis. This Desulfitobacterium hafniense (strain DSM 10664 / DCB-2) protein is Type III pantothenate kinase.